The primary structure comprises 322 residues: Porphobilinogen deaminase (322 aa).

Position 252 is an S-(dipyrrolylmethanemethyl)cysteine (cysteine 252).

The protein belongs to the HMBS family. In terms of assembly, monomer. Dipyrromethane is required as a cofactor.

The enzyme catalyses 4 porphobilinogen + H2O = hydroxymethylbilane + 4 NH4(+). It functions in the pathway porphyrin-containing compound metabolism; protoporphyrin-IX biosynthesis; coproporphyrinogen-III from 5-aminolevulinate: step 2/4. In terms of biological role, tetrapolymerization of the monopyrrole PBG into the hydroxymethylbilane pre-uroporphyrinogen in several discrete steps. The polypeptide is Porphobilinogen deaminase (Caulobacter vibrioides (strain ATCC 19089 / CIP 103742 / CB 15) (Caulobacter crescentus)).